Reading from the N-terminus, the 33-residue chain is Photosystem II reaction center protein T (33 aa).

A helical transmembrane segment spans residues 3-23 (ALVYTFLLVSTLGIIFFAIFF).

The protein belongs to the PsbT family. As to quaternary structure, PSII is composed of 1 copy each of membrane proteins PsbA, PsbB, PsbC, PsbD, PsbE, PsbF, PsbH, PsbI, PsbJ, PsbK, PsbL, PsbM, PsbT, PsbY, PsbZ, Psb30/Ycf12, at least 3 peripheral proteins of the oxygen-evolving complex and a large number of cofactors. It forms dimeric complexes.

It localises to the plastid. Its subcellular location is the chloroplast thylakoid membrane. Its function is as follows. Found at the monomer-monomer interface of the photosystem II (PS II) dimer, plays a role in assembly and dimerization of PSII. PSII is a light-driven water plastoquinone oxidoreductase, using light energy to abstract electrons from H(2)O, generating a proton gradient subsequently used for ATP formation. In Helianthus annuus (Common sunflower), this protein is Photosystem II reaction center protein T.